Reading from the N-terminus, the 414-residue chain is MTYLAVVLNGPKAKNGRKVFDSFLEQNRQMFWNRELTSACESITYMGFMRPGTLFVSGPASQLTVLKDAWARRILKPAMGYTITSLGDLGAIQQVEQMHFVPLGDVICDAVAQLNRQGLAATEQAIRQYVARHCPHVAPPGIEMVRQTITSLLSTGFVYKMADHYFVSVPTNSPMRPPAKAATKTTKTTVECQTGASMMCPQQTSTSSDEHVIEPAKKDHKKCQNSNRRSIFARLFSRGMKPQTIMPSASPIHVGGPPTPPPAAMLPTKNKYPTYHHDLNEECQRKARRRNHPRRGETQKLLSSSSECLKYYPVDMPETRPTRRRARMASPLRSSTPNNSDSAYSISPPHTDSNEEAGSISDSEINHTYININKFRRQNFDSTQFEDLTGATATTSEEPEILGRHIRGVLISNL.

The tract at residues 1-31 (MTYLAVVLNGPKAKNGRKVFDSFLEQNRQMF) is essential for association with cell cortex. The Winged helix Storkhead-box1 domain occupies 93–170 (QQVEQMHFVP…MADHYFVSVP (78 aa)). The disordered stretch occupies residues 282–362 (ECQRKARRRN…SNEEAGSISD (81 aa)). The segment at 285 to 295 (RKARRRNHPRR) is bi-partite nuclear localization signal. A nuclear localization signal region spans residues 321-327 (PTRRRAR). Over residues 332–351 (LRSSTPNNSDSAYSISPPHT) the composition is skewed to polar residues.

It localises to the cytoplasm. Its subcellular location is the cell cortex. The protein localises to the nucleus. Probable transcription factor. Required for asymmetric cell division in neuroblasts, perhaps acting by regulating spindle positioning and myosin polarization, and thus the position of the cleavage plane. Required to produce daughter cell size asymmetry in neuroblasts undergoing asymmetric cell division, usually giving rise to one precursor cell and one apoptotic cell. Positively modulates expression of the serine/threonine kinase pig-1/MELK during asymmetric division of the Q.a neuroblast. Plays a role in neural fate specification in several dopaminergic lineages, including the hermaphrodite-specific neuron (HSN)/phasmid neuron (PHB), acting in concert with the kinase, ham-1, and the T-box protein tbx-2 and the homeobox protein egl-5. This is Stork-head box protein ham-1 from Caenorhabditis elegans.